Here is a 422-residue protein sequence, read N- to C-terminus: Adenylosuccinate synthetase (422 aa).

GTP-binding positions include glycine 11–lysine 17 and glycine 39–threonine 41. Aspartate 12 acts as the Proton acceptor in catalysis. Mg(2+) is bound by residues aspartate 12 and glycine 39. IMP contacts are provided by residues aspartate 12–lysine 15, asparagine 37–histidine 40, threonine 129, arginine 143, asparagine 220, threonine 235, and arginine 299. Catalysis depends on histidine 40, which acts as the Proton donor. Valine 295–arginine 301 contributes to the substrate binding site. GTP is bound by residues arginine 301, lysine 327 to aspartate 329, and glycine 410 to glycine 412.

Belongs to the adenylosuccinate synthetase family. As to quaternary structure, homodimer. The cofactor is Mg(2+).

It localises to the cytoplasm. The enzyme catalyses IMP + L-aspartate + GTP = N(6)-(1,2-dicarboxyethyl)-AMP + GDP + phosphate + 2 H(+). The protein operates within purine metabolism; AMP biosynthesis via de novo pathway; AMP from IMP: step 1/2. Plays an important role in the de novo pathway and in the salvage pathway of purine nucleotide biosynthesis. Catalyzes the first committed step in the biosynthesis of AMP from IMP. This chain is Adenylosuccinate synthetase, found in Arthroderma otae (strain ATCC MYA-4605 / CBS 113480) (Microsporum canis).